The chain runs to 277 residues: Inner kinetochore subunit sim4 (277 aa).

Residues 96–138 are a coiled coil; the sequence is NNISDLKKNLHSNKKLEAVLKEELHQIKKFSSDLQSLKSSMGE.

Belongs to the CENP-K/MCM22 family. In terms of assembly, component of the inner kinetochore constitutive centromere-associated network (CCAN) (also known as central kinetochore Sim4 complex in fission yeast), which is composed of at least cnl2, cnp3, cnp20, fta1, fta2, fta3, fta4, fta6, fta7, mal2, mhf1, mhf2, mis6, mis15, mis17, sim4 and wip1. Interacts with mis6 and dad1.

It is found in the nucleus. The protein resides in the chromosome. The protein localises to the centromere. Component of the kinetochore, a multiprotein complex that assembles on centromeric DNA and attaches chromosomes to spindle microtubules, mediating chromosome segregation and sister chromatid segregation during meiosis and mitosis. Component of the inner kinetochore constitutive centromere-associated network (CCAN), which serves as a structural platform for outer kinetochore assembly. The sequence is that of Inner kinetochore subunit sim4 (sim4) from Schizosaccharomyces pombe (strain 972 / ATCC 24843) (Fission yeast).